A 752-amino-acid chain; its full sequence is MAP/microtubule affinity-regulating kinase 4 (752 aa).

A disordered region spans residues 1–36 (MSSRTALAPGNDRNSDTHGTLGSGRSSDKGPSWSSR). The Protein kinase domain occupies 59–310 (YRLLRTIGKG…LEQIMKDKWI (252 aa)). Residues 65–73 (IGKGNFAKV) and Lys-88 contribute to the ATP site. The active-site Proton acceptor is the Asp-181. Thr-214 carries the phosphothreonine; by LKB1 modification. The UBA domain maps to 324–368 (EPEEDFGDTKRIEVMVGMGYTREEIKEALTNQKYNEVTATYLLLG). Residues 385–615 (ARVRAPSDTT…SGRPRPTTNL (231 aa)) form a disordered region. Over residues 391–406 (SDTTNGTSSSKGSSHN) the composition is skewed to low complexity. Phosphoserine occurs at positions 423 and 543. A compositionally biased stretch (low complexity) spans 544 to 553 (PSSHSLAPPS). Residues 703–752 (AGGPEPLSHFEVEVCQLPRPGLRGVLFRRVAGTALAFRTLVTRISNDLEL) form the KA1 domain.

This sequence belongs to the protein kinase superfamily. CAMK Ser/Thr protein kinase family. SNF1 subfamily. In terms of assembly, interacts with MAPT/TAU. Interacts with gamma-tubulin. Interacts with ODF2. Interacts with USP9X. Interacts with YWHAQ. Interacts with NLRP3; promoting NLRP3 recruitment to microtubule organizing center (MTOC). Requires Mg(2+) as cofactor. Ubiquitinated with 'Lys-29'- and 'Lys-33'-linked polyubiquitins which appear to impede LKB1-mediated phosphorylation. Deubiquitinated by USP9X. In terms of processing, phosphorylated at Thr-214 by STK11/LKB1 in complex with STE20-related adapter-alpha (STRADA) pseudo kinase and CAB39. Phosphorylated throughout the cell cycle. Isoform 1 and isoform 2 show similar expression patterns in the central nervous system and are present in the same subsets of neurons including pyramidal and non-pyramidal neurons in the cerebral cortex and hippocampus, cerebellar Purkinje cells, and interneurons and motor neurons in the spinal cord but not in glial cells (at protein level). Isoform 2 is the major isoform in brain and cerebellum. Also expressed in spleen, liver, small intestine, colon, kidney, tongue, testis and lung. Isoform 1 and isoform 2 are expressed at similar levels in heart.

It localises to the cytoplasm. The protein resides in the cytoskeleton. It is found in the microtubule organizing center. Its subcellular location is the centrosome. The protein localises to the cilium axoneme. It localises to the cilium basal body. The protein resides in the cell projection. It is found in the dendrite. It catalyses the reaction L-seryl-[protein] + ATP = O-phospho-L-seryl-[protein] + ADP + H(+). The catalysed reaction is L-threonyl-[protein] + ATP = O-phospho-L-threonyl-[protein] + ADP + H(+). Its activity is regulated as follows. Activated by phosphorylation on Thr-214. Its function is as follows. Serine/threonine-protein kinase. Phosphorylates the microtubule-associated protein MAPT/TAU. Also phosphorylates the microtubule-associated proteins MAP2 and MAP4. Involved in regulation of the microtubule network, causing reorganization of microtubules into bundles. Required for the initiation of axoneme extension during cilium assembly. Regulates the centrosomal location of ODF2 and phosphorylates ODF2 in vitro. Plays a role in cell cycle progression, specifically in the G1/S checkpoint. Reduces neuronal cell survival. Plays a role in energy homeostasis by regulating satiety and metabolic rate. Promotes adipogenesis by activating JNK1 and inhibiting the p38MAPK pathway, and triggers apoptosis by activating the JNK1 pathway. Phosphorylates mTORC1 complex member RPTOR and acts as a negative regulator of the mTORC1 complex, probably due to disruption of the interaction between phosphorylated RPTOR and the RRAGA/RRAGC heterodimer which is required for mTORC1 activation. Involved in NLRP3 positioning along microtubules by mediating NLRP3 recruitment to microtubule organizing center (MTOC) upon inflammasome activation. This is MAP/microtubule affinity-regulating kinase 4 from Mus musculus (Mouse).